The sequence spans 216 residues: Phosducin-like protein 3 (216 aa).

A coiled-coil region spans residues Ala-13–Asn-59. Residues Asn-29–Thr-163 enclose the Phosducin domain.

This sequence belongs to the phosducin family. As to expression, highly expressed in germline cells of the testis from the spermatogonia stage until the early spermatid stage but is no longer observed in late-stage spermatids in the distal end of the testis.

It catalyses the reaction [thioredoxin]-dithiol + NADP(+) = [thioredoxin]-disulfide + NADPH + H(+). In terms of biological role, has redox activity with thioredoxin. Required for male fertility and maturation of sperm past the canoe stage during spermiogenesis. The polypeptide is Phosducin-like protein 3 (Drosophila melanogaster (Fruit fly)).